The following is a 289-amino-acid chain: Light-independent protochlorophyllide reductase iron-sulfur ATP-binding protein (289 aa).

Residues 10-15 (GIGKST) and K39 each bind ATP. A Mg(2+)-binding site is contributed by S14. [4Fe-4S] cluster is bound by residues C95 and C129. Residue 180-181 (NR) coordinates ATP.

This sequence belongs to the NifH/BchL/ChlL family. Homodimer. Protochlorophyllide reductase is composed of three subunits; ChlL, ChlN and ChlB. [4Fe-4S] cluster is required as a cofactor.

The protein resides in the plastid. Its subcellular location is the chloroplast. The catalysed reaction is chlorophyllide a + oxidized 2[4Fe-4S]-[ferredoxin] + 2 ADP + 2 phosphate = protochlorophyllide a + reduced 2[4Fe-4S]-[ferredoxin] + 2 ATP + 2 H2O. It participates in porphyrin-containing compound metabolism; chlorophyll biosynthesis (light-independent). In terms of biological role, component of the dark-operative protochlorophyllide reductase (DPOR) that uses Mg-ATP and reduced ferredoxin to reduce ring D of protochlorophyllide (Pchlide) to form chlorophyllide a (Chlide). This reaction is light-independent. The L component serves as a unique electron donor to the NB-component of the complex, and binds Mg-ATP. This is Light-independent protochlorophyllide reductase iron-sulfur ATP-binding protein from Tetradesmus obliquus (Green alga).